The chain runs to 93 residues: Cell division topological specificity factor (93 aa).

The protein belongs to the MinE family.

In terms of biological role, prevents the cell division inhibition by proteins MinC and MinD at internal division sites while permitting inhibition at polar sites. This ensures cell division at the proper site by restricting the formation of a division septum at the midpoint of the long axis of the cell. In Agathobacter rectalis (strain ATCC 33656 / DSM 3377 / JCM 17463 / KCTC 5835 / VPI 0990) (Eubacterium rectale), this protein is Cell division topological specificity factor.